Reading from the N-terminus, the 795-residue chain is Phenylalanine--tRNA ligase beta subunit (795 aa).

The tRNA-binding domain maps to alanine 39–arginine 148. Residues proline 401–asparagine 476 enclose the B5 domain. Mg(2+) contacts are provided by aspartate 454, aspartate 460, glutamate 463, and glutamate 464. One can recognise an FDX-ACB domain in the interval serine 701–arginine 794.

Belongs to the phenylalanyl-tRNA synthetase beta subunit family. Type 1 subfamily. In terms of assembly, tetramer of two alpha and two beta subunits. Mg(2+) is required as a cofactor.

The protein resides in the cytoplasm. The enzyme catalyses tRNA(Phe) + L-phenylalanine + ATP = L-phenylalanyl-tRNA(Phe) + AMP + diphosphate + H(+). The polypeptide is Phenylalanine--tRNA ligase beta subunit (Pseudoalteromonas translucida (strain TAC 125)).